Consider the following 207-residue polypeptide: Dephospho-CoA kinase (207 aa).

In terms of domain architecture, DPCK spans 5-207 (IVGLTGGIAS…AALQTHRIEN (203 aa)). 13 to 18 (ASGKSA) serves as a coordination point for ATP.

It belongs to the CoaE family.

It localises to the cytoplasm. It catalyses the reaction 3'-dephospho-CoA + ATP = ADP + CoA + H(+). It participates in cofactor biosynthesis; coenzyme A biosynthesis; CoA from (R)-pantothenate: step 5/5. Functionally, catalyzes the phosphorylation of the 3'-hydroxyl group of dephosphocoenzyme A to form coenzyme A. This Xanthomonas campestris pv. campestris (strain ATCC 33913 / DSM 3586 / NCPPB 528 / LMG 568 / P 25) protein is Dephospho-CoA kinase.